A 294-amino-acid polypeptide reads, in one-letter code: DEP domain-containing protein 4 (294 aa).

The 92-residue stretch at 71 to 162 (LQAQVEIKRR…SNISLYRFLG (92 aa)) folds into the DEP domain.

In Homo sapiens (Human), this protein is DEP domain-containing protein 4 (DEPDC4).